Here is a 115-residue protein sequence, read N- to C-terminus: Large ribosomal subunit protein bL19 (115 aa).

Belongs to the bacterial ribosomal protein bL19 family.

In terms of biological role, this protein is located at the 30S-50S ribosomal subunit interface and may play a role in the structure and function of the aminoacyl-tRNA binding site. The chain is Large ribosomal subunit protein bL19 from Buchnera aphidicola subsp. Schizaphis graminum (strain Sg).